Consider the following 72-residue polypeptide: Large ribosomal subunit protein bL28 (72 aa).

The protein belongs to the bacterial ribosomal protein bL28 family.

The chain is Large ribosomal subunit protein bL28 from Chlorobium limicola (strain DSM 245 / NBRC 103803 / 6330).